Reading from the N-terminus, the 309-residue chain is Mitogen-activated protein kinase kinase 8 (309 aa).

Residues 53–305 (LDRISVLGSG…ASQLLNHPFL (253 aa)) enclose the Protein kinase domain. ATP contacts are provided by residues 59–67 (LGSGNGGTV) and lysine 82. The active-site Proton acceptor is the aspartate 167. A phosphoserine mark is found at serine 195 and serine 201. Threonine 205 carries the phosphothreonine modification.

The protein belongs to the protein kinase superfamily. STE Ser/Thr protein kinase family. MAP kinase kinase subfamily. In terms of processing, phosphorylation at Ser-195 and Ser-201 by MAP kinase kinase kinases positively regulates kinase activity.

The catalysed reaction is L-seryl-[protein] + ATP = O-phospho-L-seryl-[protein] + ADP + H(+). It catalyses the reaction L-threonyl-[protein] + ATP = O-phospho-L-threonyl-[protein] + ADP + H(+). The enzyme catalyses L-tyrosyl-[protein] + ATP = O-phospho-L-tyrosyl-[protein] + ADP + H(+). This is Mitogen-activated protein kinase kinase 8 (MKK8) from Arabidopsis thaliana (Mouse-ear cress).